The following is a 401-amino-acid chain: Mitochondrial distribution and morphology protein 12 (401 aa).

One can recognise an SMP-LTD domain in the interval 1–401 (MSIDINWDTL…VYPSFWTFLV (401 aa)). Acidic residues predominate over residues 70–88 (YEEDEDYPDNEDDDDDEAG). 2 disordered regions span residues 70–95 (YEED…NPRN) and 190–247 (SLTL…EKSP). Residues 195 to 205 (PQSHPDPSSRP) are compositionally biased toward low complexity. The span at 209–220 (HQHDDERRRSLA) shows a compositional bias: basic and acidic residues.

This sequence belongs to the MDM12 family. Component of the ER-mitochondria encounter structure (ERMES) or MDM complex, composed of MMM1, MDM10, MDM12 and MDM34. An MMM1 homodimer associates with one molecule of MDM12 on each side in a pairwise head-to-tail manner, and the SMP-LTD domains of MMM1 and MDM12 generate a continuous hydrophobic tunnel for phospholipid trafficking.

It is found in the mitochondrion outer membrane. The protein localises to the endoplasmic reticulum membrane. Its function is as follows. Component of the ERMES/MDM complex, which serves as a molecular tether to connect the endoplasmic reticulum (ER) and mitochondria. Components of this complex are involved in the control of mitochondrial shape and protein biogenesis, and function in nonvesicular lipid trafficking between the ER and mitochondria. MDM12 is required for the interaction of the ER-resident membrane protein MMM1 and the outer mitochondrial membrane-resident beta-barrel protein MDM10. The MDM12-MMM1 subcomplex functions in the major beta-barrel assembly pathway that is responsible for biogenesis of all mitochondrial outer membrane beta-barrel proteins, and acts in a late step after the SAM complex. The MDM10-MDM12-MMM1 subcomplex further acts in the TOM40-specific pathway after the action of the MDM12-MMM1 complex. Essential for establishing and maintaining the structure of mitochondria and maintenance of mtDNA nucleoids. In Phaeosphaeria nodorum (strain SN15 / ATCC MYA-4574 / FGSC 10173) (Glume blotch fungus), this protein is Mitochondrial distribution and morphology protein 12.